The sequence spans 356 residues: Carbohydrate sulfotransferase 10 (356 aa).

At 1-6 the chain is on the cytoplasmic side; the sequence is MHHQWL. A helical; Signal-anchor for type II membrane protein membrane pass occupies residues 7–27; the sequence is LLAACFWVIFMFMVASKFITL. Over 28 to 356 the chain is Lumenal; it reads TFKDPDVYSA…GYQKPDFLLN (329 aa). N99 carries an N-linked (GlcNAc...) asparagine glycan. Residues 127–133 and 189–197 contribute to the 3'-phosphoadenylyl sulfate site; these read PKVGNTQ and RDPFERLIS. N228 and N316 each carry an N-linked (GlcNAc...) asparagine glycan.

The protein belongs to the sulfotransferase 2 family. In fetal tissues, it is predominantly expressed in brain, and weakly expressed in lung, kidney and liver. In adult, it is highly expressed in brain, testis, ovary, expressed at intermediate level in heart, pancreas, skeletal muscle, spleen and thymus, and weakly expressed in other tissues. In brain, it is expressed at higher level in the frontal lobe.

The protein localises to the golgi apparatus membrane. It catalyses the reaction 3-O-{beta-D-GlcA-(1-&gt;[3)-alpha-D-Xyl-(1-&gt;3)-beta-D-GlcA-(1-&gt;](n)-4)-beta-D-Xyl-(1-&gt;4)-Rib-ol-P-Rib-ol-P-3-beta-D-GalNAc-(1-&gt;3)-beta-D-GlcNAc-(1-&gt;4)-O-6-P-alpha-D-Man}-L-Thr-[protein] + 3'-phosphoadenylyl sulfate = 3-O-{O-3-S-beta-D-GlcA-(1-&gt;[3)-alpha-D-Xyl-(1-&gt;3)-beta-D-GlcA-(1-&gt;](n)-4)-beta-D-Xyl-(1-&gt;4)-Rib-ol-P-Rib-ol-P-3-beta-D-GalNAc-(1-&gt;3)-beta-D-GlcNAc-(1-&gt;4)-O-6-P-alpha-D-Man}-L-Thr-[protein] + adenosine 3',5'-bisphosphate + H(+). It carries out the reaction 17beta-estradiol 3-O-(beta-D-glucuronate) + 3'-phosphoadenylyl sulfate = 17beta-estradiol 3-O-(3-sulfo-beta-D-glucuronate) + adenosine 3',5'-bisphosphate + H(+). The enzyme catalyses 17beta-estradiol 3-O-(beta-D-glucuronate) 17-sulfate + 3'-phosphoadenylyl sulfate = 17beta-estradiol 3-O-(3-sulfo-beta-D-glucuronate) 17-sulfate + adenosine 3',5'-bisphosphate + H(+). The catalysed reaction is 17beta-estradiol 17-O-(beta-D-glucuronate) + 3'-phosphoadenylyl sulfate = 17beta-estradiol 17-O-(3-sulfo-beta-D-glucuronate) + adenosine 3',5'-bisphosphate + H(+). It catalyses the reaction 16alpha,17beta-estriol 3-O-(beta-D-glucuronate) + 3'-phosphoadenylyl sulfate = 16alpha,17beta-estriol 3-O-(3-sulfo-beta-D-glucuronate) + adenosine 3',5'-bisphosphate + H(+). It carries out the reaction 16alpha,17beta-estriol 16-O-(beta-D-glucuronate) + 3'-phosphoadenylyl sulfate = 16alpha,17beta-estriol 16-O-(3-sulfo-beta-D-glucuronate) + adenosine 3',5'-bisphosphate + H(+). The enzyme catalyses 16alpha,17beta-estriol 17-O-(beta-D-glucuronate) + 3'-phosphoadenylyl sulfate = 16alpha,17beta-estriol 17-O-(3-sulfo-beta-D-glucuronate) + adenosine 3',5'-bisphosphate + H(+). The catalysed reaction is estrone 3-O-(beta-D-glucuronate) + 3'-phosphoadenylyl sulfate = estrone 3-O-(3-sulfo-beta-D-glucuronate) + adenosine 3',5'-bisphosphate + H(+). It catalyses the reaction 3alpha,20alpha-dihydroxy-5beta-pregnane 3-O-(beta-D-glucuronate) + 3'-phosphoadenylyl sulfate = 3alpha,20alpha-dihydroxy-5beta-pregnane 3-O-(3-sulfo-beta-D-glucuronate) + adenosine 3',5'-bisphosphate + H(+). It carries out the reaction testosterone 17-O-(beta-D-glucuronate) + 3'-phosphoadenylyl sulfate = testosterone 17-O-(3-sulfo-beta-D-glucuronate) + adenosine 3',5'-bisphosphate + H(+). The enzyme catalyses 3beta-androst-5-en-17-one 3-O-(beta-D-glucuronate) + 3'-phosphoadenylyl sulfate = 3beta-androst-5-en-17-one 3-O-(3-sulfo-beta-D-glucuronate) + adenosine 3',5'-bisphosphate + H(+). The catalysed reaction is 3alpha,17alpha-dihydroxy-5beta-androstane-11-one-17beta-carboxylate 3-O-(beta-D-glucuronate) + 3'-phosphoadenylyl sulfate = 3alpha,17alpha-dihydroxy-5beta-androstane-11-one-17beta-carboxylate 3-O-(3-sulfo-beta-D-glucuronate) + adenosine 3',5'-bisphosphate + H(+). It catalyses the reaction 3alpha-hydroxyetiocholan-17-one 3-O-(beta-D-glucuronate) + 3'-phosphoadenylyl sulfate = 3alpha-hydroxyetiocholan-17-one 3-O-(3-sulfo-beta-D-glucuronate) + adenosine 3',5'-bisphosphate + H(+). The protein operates within steroid metabolism. Its pathway is protein modification; carbohydrate sulfation. Its function is as follows. Catalyzes the transfer of sulfate from 3'-phosphoadenylyl sulfate (PAPS) to position 3 of terminal glucuronic acid of both protein- and lipid-linked oligosaccharides. Participates in biosynthesis of HNK-1 carbohydrate structure 3-O-sulfo-beta-D-GlcA-(1-&gt;3)-beta-D-Gal-(1-&gt;4)-D-GlcNAc-R, a sulfated glucuronyl-lactosaminyl residue carried by many neural recognition molecules, which is involved in cell interactions during ontogenetic development and in synaptic plasticity in the adult. May be indirectly involved in synapse plasticity of the hippocampus, via its role in HNK-1 biosynthesis. Sulfates terminal glucuronyl residue of the laminin globular (LG)-domain binding epitope on DAG1/alpha-dystroglycan and prevents further polymerization by LARGE1 glycosyltransferase. Likely defines the chain length of LG epitope, conferring binding specificity to extracellular matrix components. Plays a role in down-regulating the steroid hormones. Sulfates glucuronidated estrogens and androgens with an impact in hormone cycle and fertility. Has a preference for glucuronyl moiety at the 3-hydroxyl group of a sterol ring rather than the 17-hydroxyl group, showing high catalytic efficiency for 17beta-estradiol 3-O-(beta-D-glucuronate) and dehydroepiandrosterone 3-O-(beta-D-glucuronate) hormones. The sequence is that of Carbohydrate sulfotransferase 10 from Homo sapiens (Human).